The primary structure comprises 303 residues: Probable aspartoacylase (303 aa).

2 residues coordinate Zn(2+): H13 and E16. Residues R55 and 62–63 (NR) contribute to the substrate site. H104 is a Zn(2+) binding site. Residues E162 and Y273 each contribute to the substrate site.

It belongs to the AspA/AstE family. Aspartoacylase subfamily. Zn(2+) serves as cofactor.

It catalyses the reaction an N-acyl-L-aspartate + H2O = a carboxylate + L-aspartate. In Parasynechococcus marenigrum (strain WH8102), this protein is Probable aspartoacylase.